The following is a 257-amino-acid chain: UPF0246 protein Mmc1_3117 (257 aa).

The protein belongs to the UPF0246 family.

This is UPF0246 protein Mmc1_3117 from Magnetococcus marinus (strain ATCC BAA-1437 / JCM 17883 / MC-1).